The chain runs to 296 residues: Protease HtpX homolog (296 aa).

A run of 2 helical transmembrane segments spans residues 14–34 and 39–59; these read VVLL…VGYL and YQFG…SMIF. His143 contributes to the Zn(2+) binding site. The active site involves Glu144. A Zn(2+)-binding site is contributed by His147. Helical transmembrane passes span 158–178 and 195–215; these read IAVA…RMLF and ILVL…ASLV. Zn(2+) is bound at residue Glu224.

This sequence belongs to the peptidase M48B family. Requires Zn(2+) as cofactor.

The protein resides in the cell membrane. The chain is Protease HtpX homolog from Streptococcus agalactiae serotype Ia (strain ATCC 27591 / A909 / CDC SS700).